Reading from the N-terminus, the 235-residue chain is Ubiquinone/menaquinone biosynthesis C-methyltransferase UbiE (235 aa).

Residues threonine 59, aspartate 84, and serine 123 each contribute to the S-adenosyl-L-methionine site.

This sequence belongs to the class I-like SAM-binding methyltransferase superfamily. MenG/UbiE family.

It carries out the reaction a 2-demethylmenaquinol + S-adenosyl-L-methionine = a menaquinol + S-adenosyl-L-homocysteine + H(+). The catalysed reaction is a 2-methoxy-6-(all-trans-polyprenyl)benzene-1,4-diol + S-adenosyl-L-methionine = a 5-methoxy-2-methyl-3-(all-trans-polyprenyl)benzene-1,4-diol + S-adenosyl-L-homocysteine + H(+). It participates in quinol/quinone metabolism; menaquinone biosynthesis; menaquinol from 1,4-dihydroxy-2-naphthoate: step 2/2. The protein operates within cofactor biosynthesis; ubiquinone biosynthesis. Its function is as follows. Methyltransferase required for the conversion of demethylmenaquinol (DMKH2) to menaquinol (MKH2) and the conversion of 2-polyprenyl-6-methoxy-1,4-benzoquinol (DDMQH2) to 2-polyprenyl-3-methyl-6-methoxy-1,4-benzoquinol (DMQH2). The chain is Ubiquinone/menaquinone biosynthesis C-methyltransferase UbiE from Campylobacter jejuni subsp. jejuni serotype O:2 (strain ATCC 700819 / NCTC 11168).